We begin with the raw amino-acid sequence, 191 residues long: dCTP deaminase (191 aa).

Residues 112-117 (KSTYAR), 136-138 (TLE), Q157, Y173, and Q183 contribute to the dCTP site. E138 (proton donor/acceptor) is an active-site residue.

This sequence belongs to the dCTP deaminase family. As to quaternary structure, homotrimer.

It carries out the reaction dCTP + H2O + H(+) = dUTP + NH4(+). The protein operates within pyrimidine metabolism; dUMP biosynthesis; dUMP from dCTP (dUTP route): step 1/2. Catalyzes the deamination of dCTP to dUTP. The polypeptide is dCTP deaminase (Xylella fastidiosa (strain M12)).